Reading from the N-terminus, the 199-residue chain is Chromophore lyase CpcT/CpeT (199 aa).

This sequence belongs to the CpcT/CpeT biliprotein lyase family.

Covalently attaches a chromophore to Cys residue(s) of phycobiliproteins. This is Chromophore lyase CpcT/CpeT from Prochlorococcus marinus (strain NATL1A).